Consider the following 161-residue polypeptide: Protein shisa-like-2B (161 aa).

The chain crosses the membrane as a helical span at residues 65–85; the sequence is IGALIGLGIAALVLLAFVISV. The tract at residues 115–134 is disordered; it reads QEGNSNRKSKAPRSNAASNS.

Belongs to the shisa family.

It localises to the membrane. The polypeptide is Protein shisa-like-2B (SHISAL2B) (Bos taurus (Bovine)).